A 167-amino-acid chain; its full sequence is Anaerobic nitrite reductase NSHB4 (167 aa).

The Globin domain occupies 12-162 (RFTEEQEALV…LVAAIKEGMK (151 aa)). A Homodimerization motif is present at residues 45–49 (EVAPS). Residues Ser-55, His-73, Arg-103, Thr-107, and His-108 each contribute to the heme b site. Positions 115–127 (DTHFEVARFALLE) match the Homodimerization motif.

This sequence belongs to the plant globin family. As to quaternary structure, homodimer. Requires heme b as cofactor.

It localises to the cytoplasm. The protein localises to the nucleus. It carries out the reaction Fe(III)-heme b-[protein] + nitric oxide + H2O = Fe(II)-heme b-[protein] + nitrite + 2 H(+). Phytoglobin that reduces nitrite to nitric oxide under anoxic conditions (e.g. during flooding or in waterlogged soil). May not function as an oxygen storage or transport protein. Has an unusually high affinity for O(2) through an hexacoordinate heme iron because of a very low dissociation constant. In Oryza sativa subsp. indica (Rice), this protein is Anaerobic nitrite reductase NSHB4.